A 49-amino-acid polypeptide reads, in one-letter code: Photosystem II reaction center protein K (49 aa).

The propeptide occupies 1–12; the sequence is MISSIHLRKLLG. A helical transmembrane segment spans residues 24–44; that stretch reads IIDVLPIIPVLFLLLAFVWQA.

It belongs to the PsbK family. PSII is composed of 1 copy each of membrane proteins PsbA, PsbB, PsbC, PsbD, PsbE, PsbF, PsbH, PsbI, PsbJ, PsbK, PsbL, PsbM, PsbT, PsbX, PsbY, PsbZ, Psb30/Ycf12, at least 3 peripheral proteins of the oxygen-evolving complex and a large number of cofactors. It forms dimeric complexes.

It is found in the plastid. Its subcellular location is the chloroplast thylakoid membrane. Functionally, one of the components of the core complex of photosystem II (PSII). PSII is a light-driven water:plastoquinone oxidoreductase that uses light energy to abstract electrons from H(2)O, generating O(2) and a proton gradient subsequently used for ATP formation. It consists of a core antenna complex that captures photons, and an electron transfer chain that converts photonic excitation into a charge separation. The polypeptide is Photosystem II reaction center protein K (Phacus acuminatus).